The sequence spans 372 residues: Glutamate 5-kinase (372 aa).

An ATP-binding site is contributed by Lys-14. Substrate contacts are provided by Ser-54, Asp-141, and Asn-153. 173–174 (TD) is a binding site for ATP. Residues 280–358 (RGTLVLDAGA…DAIESLLGYS (79 aa)) form the PUA domain.

The protein belongs to the glutamate 5-kinase family.

The protein resides in the cytoplasm. The catalysed reaction is L-glutamate + ATP = L-glutamyl 5-phosphate + ADP. The protein operates within amino-acid biosynthesis; L-proline biosynthesis; L-glutamate 5-semialdehyde from L-glutamate: step 1/2. Catalyzes the transfer of a phosphate group to glutamate to form L-glutamate 5-phosphate. The chain is Glutamate 5-kinase from Pseudomonas putida (strain W619).